The chain runs to 161 residues: Crossover junction endodeoxyribonuclease RuvC (161 aa).

Catalysis depends on residues Asp-8, Glu-67, and Asp-139. 3 residues coordinate Mg(2+): Asp-8, Glu-67, and Asp-139.

Belongs to the RuvC family. In terms of assembly, homodimer which binds Holliday junction (HJ) DNA. The HJ becomes 2-fold symmetrical on binding to RuvC with unstacked arms; it has a different conformation from HJ DNA in complex with RuvA. In the full resolvosome a probable DNA-RuvA(4)-RuvB(12)-RuvC(2) complex forms which resolves the HJ. Mg(2+) is required as a cofactor.

The protein localises to the cytoplasm. The catalysed reaction is Endonucleolytic cleavage at a junction such as a reciprocal single-stranded crossover between two homologous DNA duplexes (Holliday junction).. In terms of biological role, the RuvA-RuvB-RuvC complex processes Holliday junction (HJ) DNA during genetic recombination and DNA repair. Endonuclease that resolves HJ intermediates. Cleaves cruciform DNA by making single-stranded nicks across the HJ at symmetrical positions within the homologous arms, yielding a 5'-phosphate and a 3'-hydroxyl group; requires a central core of homology in the junction. The consensus cleavage sequence is 5'-(A/T)TT(C/G)-3'. Cleavage occurs on the 3'-side of the TT dinucleotide at the point of strand exchange. HJ branch migration catalyzed by RuvA-RuvB allows RuvC to scan DNA until it finds its consensus sequence, where it cleaves and resolves the cruciform DNA. In Wigglesworthia glossinidia brevipalpis, this protein is Crossover junction endodeoxyribonuclease RuvC.